The sequence spans 1432 residues: Probable ATP-dependent RNA helicase spindle-E (1432 aa).

Residues 125-292 form the Helicase ATP-binding domain; the sequence is MKAIRENTVV…FATKNGIPPV (168 aa). 138–145 serves as a coordination point for ATP; sequence GETGCGKT. The DEAH box signature appears at 238–241; sequence DEVH. The Helicase C-terminal domain occupies 342-525; it reads VIDNMERRTE…SSVLKAKELN (184 aa). Positions 936–999 constitute a Tudor domain; that stretch reads AGSITKNLKL…RFMSNQLKRE (64 aa).

The protein belongs to the DEAD box helicase family. DEAH subfamily.

It is found in the cytoplasm. It carries out the reaction ATP + H2O = ADP + phosphate + H(+). In terms of biological role, probable ATP-binding RNA helicase which plays a central role during spermatogenesis and oogenesis by repressing transposable elements and preventing their mobilization, which is essential for the germline integrity. Acts via the piRNA metabolic process, which mediates the repression of transposable elements during meiosis by forming complexes composed of piRNAs and Piwi and govern the methylation and subsequent repression of transposons. Involved in the repression of LTR retrotransposon copia. Also involved in telomere regulation by repressing specialized telomeric retroelements HeT-A, TAHRE, and TART; Drosophila telomeres being maintained by transposition of specialized telomeric retroelements. Involved in telomeric trans-silencing, a repression mechanism by which a transposon or a transgene inserted in subtelomeric heterochromatin has the capacity to repress in trans in the female germline, a homologous transposon, or transgene located in euchromatin. Involved in the repression of testis-expressed Stellate genes by the homologous Su(Ste) repeats. Required for anteroposterior and dorsoventral axis formation during oogenesis. This chain is Probable ATP-dependent RNA helicase spindle-E (spn-E), found in Drosophila willistoni (Fruit fly).